Reading from the N-terminus, the 480-residue chain is Sulfate adenylyltransferase subunit 1 (480 aa).

One can recognise a tr-type G domain in the interval 30-248 (KGLLRFLTCG…TVDVKKEASK (219 aa)). The segment at 39–46 (GSVDDGKS) is G1. GTP is bound at residue 39–46 (GSVDDGKS). The tract at residues 97–101 (GITID) is G2. The G3 stretch occupies residues 118–121 (DTPG). GTP-binding positions include 118 to 122 (DTPGH) and 173 to 176 (NKMD). The interval 173–176 (NKMD) is G4. Positions 211–213 (SAL) are G5.

Belongs to the TRAFAC class translation factor GTPase superfamily. Classic translation factor GTPase family. CysN/NodQ subfamily. Heterodimer composed of CysD, the smaller subunit, and CysN.

It catalyses the reaction sulfate + ATP + H(+) = adenosine 5'-phosphosulfate + diphosphate. Its pathway is sulfur metabolism; hydrogen sulfide biosynthesis; sulfite from sulfate: step 1/3. Functionally, with CysD forms the ATP sulfurylase (ATPS) that catalyzes the adenylation of sulfate producing adenosine 5'-phosphosulfate (APS) and diphosphate, the first enzymatic step in sulfur assimilation pathway. APS synthesis involves the formation of a high-energy phosphoric-sulfuric acid anhydride bond driven by GTP hydrolysis by CysN coupled to ATP hydrolysis by CysD. This Photorhabdus laumondii subsp. laumondii (strain DSM 15139 / CIP 105565 / TT01) (Photorhabdus luminescens subsp. laumondii) protein is Sulfate adenylyltransferase subunit 1.